The following is a 256-amino-acid chain: UPF0246 protein PG_1544 (256 aa).

This sequence belongs to the UPF0246 family.

The protein is UPF0246 protein PG_1544 of Porphyromonas gingivalis (strain ATCC BAA-308 / W83).